Here is a 590-residue protein sequence, read N- to C-terminus: Guanylate-binding protein 5 (590 aa).

Residues 1–306 form an NLRP3-binding region; sequence MAPEIHMPEP…LTYVDAINSG (306 aa). Residues 1-310 form a GTPase domain (Globular) region; that stretch reads MAPEIHMPEP…DAINSGALPS (310 aa). One can recognise a GB1/RHD3-type G domain in the interval 35–277; the sequence is TQPVVVVAIV…FCSHIFTQSK (243 aa). Residues 45-52, 67-69, 182-183, and Leu246 each bind GTP; these read GLYRTGKS, VGS, and RD. Residues 529 to 590 form a required for tetramerization, but not for dimerization region; the sequence is QIALEKARVA…RRHHHDCVIS (62 aa). Cys587 bears the Cysteine methyl ester mark. A lipid anchor (S-geranylgeranyl cysteine) is attached at Cys587. Positions 588 to 590 are cleaved as a propeptide — removed in mature form; it reads VIS.

It belongs to the TRAFAC class dynamin-like GTPase superfamily. GB1/RHD3 GTPase family. GB1 subfamily. In terms of assembly, homodimer; homodimerizes upon GTP-binding, forming a close face-to-face dimer. Heterodimer with other family members, including GBP1, GBP2, GBP3 and GBP4. May also form tetramers (dimer of dimers) in the presence of GTP. Interacts with NLRP3, possibly in its tetrameric form, and promotes PYCARD/ASC polymerization. In terms of processing, isoprenylation is required for proper subcellular location. As to expression, low expression, if any, in many tissues in the absence of stimulation.

The protein localises to the cytoplasmic vesicle membrane. Its subcellular location is the golgi apparatus membrane. It is found in the cytoplasm. The enzyme catalyses GTP + H2O = GDP + phosphate + H(+). In terms of biological role, interferon (IFN)-inducible GTPase that plays important roles in innate immunity against a diverse range of bacterial, viral and protozoan pathogens. Hydrolyzes GTP, but in contrast to other family members, does not produce GMP. Following infection, recruited to the pathogen-containing vacuoles or vacuole-escaped bacteria and acts as a positive regulator of inflammasome assembly by promoting the release of inflammasome ligands from bacteria. Acts by promoting lysis of pathogen-containing vacuoles, releasing pathogens into the cytosol. Following pathogen release in the cytosol, promotes recruitment of proteins that mediate bacterial cytolysis, such as Gm12250/Irgb10: this liberates ligands that are detected by inflammasomes, such as lipopolysaccharide (LPS) that activates the non-canonical CASP4/CASP11 inflammasome or double-stranded DNA (dsDNA) that activates the AIM2 inflammasome. As an activator of NLRP3 inflammasome assembly: promotes selective NLRP3 inflammasome assembly in response to microbial and soluble, but not crystalline, agents. Independently of its GTPase activity, acts as an inhibitor of various viruses infectivity by inhibiting FURIN-mediated maturation of viral envelope proteins. This is Guanylate-binding protein 5 from Mus musculus (Mouse).